The following is a 381-amino-acid chain: N-acetyldiaminopimelate deacetylase (381 aa).

Asp73 is an active-site residue. Catalysis depends on Glu132, which acts as the Proton acceptor.

Belongs to the peptidase M20A family. N-acetyldiaminopimelate deacetylase subfamily.

The enzyme catalyses N-acetyl-(2S,6S)-2,6-diaminopimelate + H2O = (2S,6S)-2,6-diaminopimelate + acetate. It functions in the pathway amino-acid biosynthesis; L-lysine biosynthesis via DAP pathway; LL-2,6-diaminopimelate from (S)-tetrahydrodipicolinate (acetylase route): step 3/3. Catalyzes the conversion of N-acetyl-diaminopimelate to diaminopimelate and acetate. This Limosilactobacillus reuteri (strain DSM 20016) (Lactobacillus reuteri) protein is N-acetyldiaminopimelate deacetylase.